Here is a 339-residue protein sequence, read N- to C-terminus: D-erythrose-4-phosphate dehydrogenase (339 aa).

11 to 12 contributes to the NAD(+) binding site; it reads RI. Substrate is bound by residues 158–160, Arg-204, 217–218, and Arg-240; these read SCT and TK. Cys-159 functions as the Nucleophile in the catalytic mechanism. Residue Asn-322 coordinates NAD(+).

This sequence belongs to the glyceraldehyde-3-phosphate dehydrogenase family. Epd subfamily. As to quaternary structure, homotetramer.

The protein resides in the cytoplasm. It carries out the reaction D-erythrose 4-phosphate + NAD(+) + H2O = 4-phospho-D-erythronate + NADH + 2 H(+). It functions in the pathway cofactor biosynthesis; pyridoxine 5'-phosphate biosynthesis; pyridoxine 5'-phosphate from D-erythrose 4-phosphate: step 1/5. In terms of biological role, catalyzes the NAD-dependent conversion of D-erythrose 4-phosphate to 4-phosphoerythronate. This Aliivibrio salmonicida (strain LFI1238) (Vibrio salmonicida (strain LFI1238)) protein is D-erythrose-4-phosphate dehydrogenase.